A 351-amino-acid chain; its full sequence is 1-aminocyclopropane-1-carboxylate oxidase homolog 4 (351 aa).

One can recognise a Fe2OG dioxygenase domain in the interval 200–304 (KSQYMVGQHY…AIVFSTFMRA (105 aa)). Fe cation contacts are provided by His-224, Asp-226, and His-280. Position 291 (Arg-291) interacts with 2-oxoglutarate.

The protein belongs to the iron/ascorbate-dependent oxidoreductase family. Fe(2+) serves as cofactor.

The polypeptide is 1-aminocyclopropane-1-carboxylate oxidase homolog 4 (Arabidopsis thaliana (Mouse-ear cress)).